The primary structure comprises 179 residues: Transcription factor 21 (179 aa).

Positions 20–87 (CDGLKMDSNK…QVQRNAANAR (68 aa)) are disordered. The span at 33–46 (TSNESTEESSNCEN) shows a compositional bias: low complexity. Residues 70 to 80 (SGVSQEGKQVQ) show a composition bias toward polar residues. The bHLH domain occupies 79 to 131 (VQRNAANARERARMRVLSKAFSRLKTTLPWVPPDTKLSKLDTLRLASSYIAHL).

Efficient DNA binding requires dimerization with another bHLH protein. Forms a heterodimer with TCF3 and binds the E box (5'-CANNTG-3').

Its subcellular location is the nucleus. In terms of biological role, involved in epithelial-mesenchymal interactions in kidney and lung morphogenesis that include epithelial differentiation and branching morphogenesis. May play a role in the specification or differentiation of one or more subsets of epicardial cell types. The chain is Transcription factor 21 (TCF21) from Homo sapiens (Human).